Here is a 264-residue protein sequence, read N- to C-terminus: Granzyme K (264 aa).

A signal peptide spans 1 to 24; it reads MTKFSSFSLFFLIVGAYMTHVCFN. The propeptide at 25–26 is activation peptide; the sequence is ME. In terms of domain architecture, Peptidase S1 spans 27 to 259; it reads IIGGKEVSPH…YQTWIKSNLV (233 aa). An intrachain disulfide couples C52 to C68. Catalysis depends on charge relay system residues H67 and D116. 3 disulfide bridges follow: C149/C220, C181/C199, and C210/C234. The Charge relay system role is filled by S214.

This sequence belongs to the peptidase S1 family. Granzyme subfamily. As to expression, expressed in lung, spleen, thymus and peripheral blood leukocytes.

It is found in the secreted. It localises to the cytoplasmic granule. The sequence is that of Granzyme K (GZMK) from Homo sapiens (Human).